The sequence spans 287 residues: MEEKEDKHQQHKIEDAAITYVSENEEIKHEEKPGKSIHHSKSHVGRGRIYYAKFINTNARTYNEPFPYIDPKKGPEIQGDWWSHGKALEPVFLPPYDSKSTQRSDFQKPSCPLVLPVKHSKMQKPSCGIVPLASPGTSAELQNNFIEYISFIHQYDARKTPNEPLQGKRHGAFVQREIKPGSRPTVPKGAEVLLNTPGSRSSEQSKKTEKGNSAESRMISPGLCQQNSQELLEPKTHLSETDVRQAAKACPSTPESREKTSGATQTTVGDALFTRHKPLNPPIKKSE.

2 stretches are compositionally biased toward basic and acidic residues: residues 1 to 15 and 25 to 34; these read MEEKEDKHQQHKIED and EEIKHEEKPG. A disordered region spans residues 1 to 42; that stretch reads MEEKEDKHQQHKIEDAAITYVSENEEIKHEEKPGKSIHHSKS. The interval 128 to 160 is mn 1; the sequence is GIVPLASPGTSAELQNNFIEYISFIHQYDARKT. The segment at 179–287 is disordered; it reads KPGSRPTVPK…PLNPPIKKSE (109 aa). 2 stretches are compositionally biased toward basic and acidic residues: residues 203–212 and 232–245; these read EQSKKTEKGN and LEPKTHLSETDVRQ. A mn 2 region spans residues 213 to 246; sequence SAESRMISPGLCQQNSQELLEPKTHLSETDVRQA.

It localises to the cell projection. It is found in the cilium. The chain is Ciliary microtubule inner protein 6 from Homo sapiens (Human).